Consider the following 567-residue polypeptide: MHGRLKVKTSEEQAEAKRLEREQKLKLYQSATQAVFQKRQAGELDESVLELTSQILGANPDFATLWNCRREVLQHLETEKSPEESAALVKAELGFLESCLRVNPKSYGTWHHRCWLLSRLPEPNWARELELCARFLEADERNFHCWDYRRFVAAQAAVAPAEELAFTDSLITRNFSNYSSWHYRSCLLPQLHPQPDSGPQGRLPENVLLKELELVQNAFFTDPNDQSAWFYHRWLLGRAEPHDVLCCVHVSREEACLSVCFSRPLTVGSRMGTLLLMVDEAPLSVEWRTPDGRNRPSHVWLCDLPAASLNDQLPQHTFRVIWTGSDSQKECVLLKDRPECWCRDSATDEQLFRCELSVEKSTVLQSELESCKELQELEPENKWCLLTIILLMRALDPLLYEKETLQYFSTLKAVDPMRAAYLDDLRSKFLLENSVLKMEYADVRVLHLAHKDLTVLCHLEQLLLVTHLDLSHNRLRALPPALAALRCLEVLQASDNALENVDGVANLPRLQELLLCNNRLQQSAAIQPLVSCPRLVLLNLQGNSLCQEEGIQERLAEMLPSVSSILT.

PFTA repeat units follow at residues 44-78 (LDES…HLET), 88-122 (LVKA…RLPE), 124-158 (NWAR…QAAV), 159-193 (APAE…QLHP), 207-241 (VLLK…RAEP), and 363-397 (VLQS…ALDP). Serine 98 is modified (phosphoserine). LRR repeat units follow at residues 442 to 463 (DVRV…EQLL), 464 to 486 (LVTH…AALR), 487 to 508 (CLEV…ANLP), 509 to 530 (RLQE…QPLV), and 534 to 555 (RLVL…QERL).

The protein belongs to the protein prenyltransferase subunit alpha family. Heterotrimer composed of RABGGTA, RABGGTB and CHM; within this trimer, RABGGTA and RABGGTB form the catalytic component B, while CHM (component A) mediates peptide substrate binding. The Rab GGTase dimer (RGGT) interacts with CHM (component A) prior to Rab protein binding; the association is stabilized by geranylgeranyl pyrophosphate (GGpp). The CHM:RGGT:Rab complex is destabilized by GGpp. Interacts with non-phosphorylated form of RAB8A; phosphorylation of RAB8A at 'Thr-72' disrupts this interaction. As to expression, most abundant in the heart, brain, spleen and liver. Less in the lung, muscle, kidney and testis; in these tissues less abundant than the beta subunit.

It catalyses the reaction geranylgeranyl diphosphate + L-cysteinyl-[protein] = S-geranylgeranyl-L-cysteinyl-[protein] + diphosphate. With respect to regulation, the enzymatic reaction requires the aid of a Rab escort protein (also called component A), such as CHM. Functionally, catalyzes the transfer of a geranylgeranyl moiety from geranylgeranyl diphosphate to both cysteines of Rab proteins with the C-terminal sequence -XXCC, -XCXC and -CCXX, such as RAB1A, RAB3A, RAB5A and RAB7A. The protein is Geranylgeranyl transferase type-2 subunit alpha (Rabggta) of Rattus norvegicus (Rat).